The following is a 424-amino-acid chain: Virion nicking-joining enzyme (424 aa).

This sequence belongs to the orthopoxvirus OPG042 family.

It is found in the virion. Functionally, DNA nicking enzyme that cleaves extruded cruciform DNA at its tip. Probably nicks viral hairpins. This is Virion nicking-joining enzyme (OPG042) from Cynomys gunnisoni (Gunnison's prairie dog).